The following is an 85-amino-acid chain: Conotoxin Lt28.2 (85 aa).

The N-terminal stretch at 1–21 is a signal peptide; the sequence is MPKLEMMLLVLLILPLCYIDA. Positions 22–40 are excised as a propeptide; sequence VGPPPPWNMEDEIIEHWQK.

The protein belongs to the conotoxin D superfamily. Post-translationally, contains 5 disulfide bonds. As to expression, expressed by the venom duct.

It is found in the secreted. Functionally, probable neurotoxin. The polypeptide is Conotoxin Lt28.2 (Conus litteratus (Lettered cone)).